Reading from the N-terminus, the 105-residue chain is Integration host factor subunit beta (105 aa).

Belongs to the bacterial histone-like protein family. In terms of assembly, heterodimer of an alpha and a beta chain.

In terms of biological role, this protein is one of the two subunits of integration host factor, a specific DNA-binding protein that functions in genetic recombination as well as in transcriptional and translational control. The polypeptide is Integration host factor subunit beta (Nitrosomonas europaea (strain ATCC 19718 / CIP 103999 / KCTC 2705 / NBRC 14298)).